The following is a 260-amino-acid chain: Transmembrane protein 106C (260 aa).

G2 is lipidated: N-myristoyl glycine. The helical transmembrane segment at 85–105 threads the bilayer; the sequence is YVLLSVLLCLLASGLVFFFLF. A glycan (N-linked (GlcNAc...) asparagine) is linked at N184. Residues 196 to 216 form a helical membrane-spanning segment; sequence SYVYFYCTLPAIRVHNIVIFM.

The protein belongs to the TMEM106 family. Interacts with TMEM106B.

It is found in the endoplasmic reticulum membrane. Its subcellular location is the membrane. The chain is Transmembrane protein 106C (Tmem106c) from Mus musculus (Mouse).